The sequence spans 208 residues: Ribosome maturation factor RimP (208 aa).

Residues 189–208 (EAPETGATTMARDGSEEETK) are disordered.

This sequence belongs to the RimP family.

The protein localises to the cytoplasm. Its function is as follows. Required for maturation of 30S ribosomal subunits. This is Ribosome maturation factor RimP from Ruegeria pomeroyi (strain ATCC 700808 / DSM 15171 / DSS-3) (Silicibacter pomeroyi).